We begin with the raw amino-acid sequence, 385 residues long: Xanthosine methyltransferase 2 (385 aa).

Tyr-18 lines the S-adenosyl-L-homocysteine pocket. The xanthosine site is built by Asn-21 and Asn-25. S-adenosyl-L-homocysteine-binding residues include Cys-62, Asn-67, Asp-101, Leu-102, Ser-140, Phe-141, and Cys-157. Tyr-158 is a xanthosine binding site. Residue Cys-159 coordinates S-adenosyl-L-homocysteine. Positions 161 and 162 each coordinate xanthosine. Mg(2+) is bound by residues Asn-179, Asp-261, Phe-263, and Asn-264. Xanthosine contacts are provided by Ser-329, Tyr-334, and Tyr-369.

Belongs to the methyltransferase superfamily. Type-7 methyltransferase family. Mg(2+) is required as a cofactor. As to expression, expressed at low levels in young leaves but not in mature leaves. Barely detectable in fruits (grains).

The enzyme catalyses xanthosine + S-adenosyl-L-methionine = 7-methylxanthosine + S-adenosyl-L-homocysteine. The protein operates within alkaloid biosynthesis. In terms of biological role, involved in the biosynthesis of caffeine. Specific for xanthosine and could not use xanthosine 5'-monophosphate (XMP) as substrate. Catalyzes the 7-N-methylation activity of xanthosine, but does not have 1-N- or 3-N-methylation activity. In Coffea arabica (Arabian coffee), this protein is Xanthosine methyltransferase 2.